Consider the following 451-residue polypeptide: MNTRVLTGITTTGTPHLGNYAGAIRPAIQASTQPGVDAFFFLADYHALIKCDDPARVARSRLELAATWLAAGLDPERVTFYRQSDIPEITELCWLLTCVTPKGLMNRAHAYKASVDQNAAKGVEPDDGVTMGLFSYPVLMAADILLFNANQVPVGRDQVQHLEMARDIAQRFNHLYGREFFVLPEVVIAEEVATLPGLDGRKMSKSYNNTIPLFEGGAAGLRNATQRIVTDSRLPGEPKDAEASHLYMLYRAFSTQQESMAFRRQLEEGMGWGDAKQALYERLERDLAPMRERYVELISNPGLIEDILQAGAAKARKLAQPLVRTLRDAVGLGALQPAAAKAAQPARKAAKDARFVSFRDEDGSFRFRLLAADGEELLCSVPFANPKEAGALMRRLQDEAPEQALRGHDDVSYAAWLDGKEVAYGPQAADAGARDALLAKAREALAQLAAA.

Residues 10–12 (TTT) and 18–19 (GN) contribute to the ATP site. The 'HIGH' region signature appears at 11 to 19 (TTGTPHLGN). D143 contacts L-tryptophan. ATP contacts are provided by residues 155 to 157 (GRD), L195, and 202 to 206 (KMSKS). Positions 202-206 (KMSKS) match the 'KMSKS' region motif.

This sequence belongs to the class-I aminoacyl-tRNA synthetase family. In terms of assembly, homodimer.

It is found in the cytoplasm. The catalysed reaction is tRNA(Trp) + L-tryptophan + ATP = L-tryptophyl-tRNA(Trp) + AMP + diphosphate + H(+). Catalyzes the attachment of tryptophan to tRNA(Trp). The protein is Tryptophan--tRNA ligase of Bordetella bronchiseptica (strain ATCC BAA-588 / NCTC 13252 / RB50) (Alcaligenes bronchisepticus).